We begin with the raw amino-acid sequence, 185 residues long: Prorelaxin H1 (185 aa).

A signal peptide spans 1–22 (MPRLFLFHLLEFCLLLNQFSRA). Disulfide bonds link Cys-35–Cys-172, Cys-47–Cys-185, and Cys-171–Cys-176. The propeptide at 56 to 158 (SLSQEDAPQT…KYLGLDTHSQ (103 aa)) is connecting peptide.

This sequence belongs to the insulin family. Heterodimer of a B chain and an A chain linked by two disulfide bonds. In terms of tissue distribution, prostate. Not expressed in placenta, decidua or ovary.

It localises to the secreted. Functionally, relaxin is an ovarian hormone that acts with estrogen to produce dilatation of the birth canal in many mammals. May be involved in remodeling of connective tissues during pregnancy, promoting growth of pubic ligaments and ripening of the cervix. This Homo sapiens (Human) protein is Prorelaxin H1 (RLN1).